A 625-amino-acid polypeptide reads, in one-letter code: Cysteine-rich receptor-like protein kinase 46 (625 aa).

The signal sequence occupies residues methionine 1 to serine 23. Topologically, residues methionine 24 to asparagine 252 are extracellular. 2 Gnk2-homologous domains span residues isoleucine 29–phenylalanine 130 and valine 135–phenylalanine 237. N-linked (GlcNAc...) asparagine glycans are attached at residues asparagine 38, asparagine 127, asparagine 234, and asparagine 252. A helical membrane pass occupies residues leucine 253 to cysteine 273. Residues glycine 274–methionine 625 lie on the Cytoplasmic side of the membrane. Residues phenylalanine 331–leucine 621 form the Protein kinase domain. Residues leucine 337–valine 345 and lysine 359 contribute to the ATP site. Tyrosine 404 carries the phosphotyrosine modification. The active-site Proton acceptor is aspartate 454. Phosphoserine is present on serine 458. Residue threonine 499 is modified to Phosphothreonine. Residue tyrosine 507 is modified to Phosphotyrosine.

It belongs to the protein kinase superfamily. Ser/Thr protein kinase family. CRK subfamily.

It is found in the membrane. It catalyses the reaction L-seryl-[protein] + ATP = O-phospho-L-seryl-[protein] + ADP + H(+). The catalysed reaction is L-threonyl-[protein] + ATP = O-phospho-L-threonyl-[protein] + ADP + H(+). The chain is Cysteine-rich receptor-like protein kinase 46 from Arabidopsis thaliana (Mouse-ear cress).